Reading from the N-terminus, the 373-residue chain is Phospho-N-acetylmuramoyl-pentapeptide-transferase (373 aa).

A run of 10 helical transmembrane segments spans residues 34–54, 78–98, 100–120, 141–161, 181–201, 212–232, 252–272, 275–295, 301–321, and 350–370; these read GALF…ISSL, TPTM…LLWA, LANV…AIGF, LGLE…TALS, FMLN…VSAG, GLAI…AYLA, LAVV…FNAP, AIFM…TVAV, IVMA…IIQV, and QVVV…LSTL.

Belongs to the glycosyltransferase 4 family. MraY subfamily. Mg(2+) serves as cofactor.

The protein localises to the cell inner membrane. It carries out the reaction UDP-N-acetyl-alpha-D-muramoyl-L-alanyl-gamma-D-glutamyl-meso-2,6-diaminopimeloyl-D-alanyl-D-alanine + di-trans,octa-cis-undecaprenyl phosphate = di-trans,octa-cis-undecaprenyl diphospho-N-acetyl-alpha-D-muramoyl-L-alanyl-D-glutamyl-meso-2,6-diaminopimeloyl-D-alanyl-D-alanine + UMP. It functions in the pathway cell wall biogenesis; peptidoglycan biosynthesis. Catalyzes the initial step of the lipid cycle reactions in the biosynthesis of the cell wall peptidoglycan: transfers peptidoglycan precursor phospho-MurNAc-pentapeptide from UDP-MurNAc-pentapeptide onto the lipid carrier undecaprenyl phosphate, yielding undecaprenyl-pyrophosphoryl-MurNAc-pentapeptide, known as lipid I. This chain is Phospho-N-acetylmuramoyl-pentapeptide-transferase, found in Rhizobium rhizogenes (strain K84 / ATCC BAA-868) (Agrobacterium radiobacter).